Consider the following 367-residue polypeptide: Nodulation protein NolF (367 aa).

It belongs to the membrane fusion protein (MFP) (TC 8.A.1) family.

In terms of biological role, involved in the production of Medicago-specific nodulation signal molecule. The polypeptide is Nodulation protein NolF (nolF) (Rhizobium meliloti (strain 1021) (Ensifer meliloti)).